We begin with the raw amino-acid sequence, 282 residues long: Pyrroline-5-carboxylate reductase (282 aa).

The protein belongs to the pyrroline-5-carboxylate reductase family.

The enzyme catalyses L-proline + NADP(+) = (S)-1-pyrroline-5-carboxylate + NADPH + 2 H(+). It carries out the reaction L-proline + NAD(+) = (S)-1-pyrroline-5-carboxylate + NADH + 2 H(+). It participates in amino-acid biosynthesis; L-proline biosynthesis; L-proline from L-glutamate 5-semialdehyde: step 1/1. The sequence is that of Pyrroline-5-carboxylate reductase (pro3) from Schizosaccharomyces pombe (strain 972 / ATCC 24843) (Fission yeast).